Consider the following 85-residue polypeptide: Putative defensin-like protein 79 (85 aa).

An N-terminal signal peptide occupies residues 1–31; that stretch reads MKSEKSADAYGTYFLLISTIFLLFIARQASS. Intrachain disulfides connect C37–C69, C44–C60, C47–C67, and C51–C68.

It belongs to the DEFL family.

Its subcellular location is the secreted. The polypeptide is Putative defensin-like protein 79 (Arabidopsis thaliana (Mouse-ear cress)).